Reading from the N-terminus, the 274-residue chain is Acetyl-coenzyme A carboxylase carboxyl transferase subunit alpha (274 aa).

Residues 2–250 form the CoA carboxyltransferase C-terminal domain; the sequence is NKEFIKSIVV…KKELMNAMNE (249 aa).

It belongs to the AccA family. In terms of assembly, acetyl-CoA carboxylase is a heterohexamer composed of biotin carboxyl carrier protein (AccB), biotin carboxylase (AccC) and two subunits each of ACCase subunit alpha (AccA) and ACCase subunit beta (AccD).

Its subcellular location is the cytoplasm. The catalysed reaction is N(6)-carboxybiotinyl-L-lysyl-[protein] + acetyl-CoA = N(6)-biotinyl-L-lysyl-[protein] + malonyl-CoA. Its pathway is lipid metabolism; malonyl-CoA biosynthesis; malonyl-CoA from acetyl-CoA: step 1/1. Functionally, component of the acetyl coenzyme A carboxylase (ACC) complex. First, biotin carboxylase catalyzes the carboxylation of biotin on its carrier protein (BCCP) and then the CO(2) group is transferred by the carboxyltransferase to acetyl-CoA to form malonyl-CoA. The sequence is that of Acetyl-coenzyme A carboxylase carboxyl transferase subunit alpha from Clostridium botulinum (strain Eklund 17B / Type B).